Reading from the N-terminus, the 260-residue chain is Phosphate import ATP-binding protein PstB (260 aa).

In terms of domain architecture, ABC transporter spans 14 to 255 (LQIRNLDFFY…PGKKQTEDYI (242 aa)). 46-53 (GPSGCGKS) provides a ligand contact to ATP.

Belongs to the ABC transporter superfamily. Phosphate importer (TC 3.A.1.7) family. In terms of assembly, the complex is composed of two ATP-binding proteins (PstB), two transmembrane proteins (PstC and PstA) and a solute-binding protein (PstS).

It is found in the cell inner membrane. The enzyme catalyses phosphate(out) + ATP + H2O = ADP + 2 phosphate(in) + H(+). Functionally, part of the ABC transporter complex PstSACB involved in phosphate import. Responsible for energy coupling to the transport system. In Thiobacillus denitrificans (strain ATCC 25259 / T1), this protein is Phosphate import ATP-binding protein PstB.